A 33-amino-acid chain; its full sequence is Alpha-amanitin proprotein 2 (33 aa).

A propeptide spanning residues 1-10 is cleaved from the precursor; the sequence is MSDINATRLP. Ile-11 carries the (3R,4R)-4,5-dihydroxyisoleucine; in form alpha-amanitin modification. Ile-11 bears the (3R,4S)-4-hydroxyisoleucine; in form gamma-amanitin mark. The cyclopeptide (Ile-Pro) cross-link spans 11-18; the sequence is IWGIGCNP. A cross-link (2'-cysteinyl-6'-hydroxytryptophan sulfoxide (Trp-Cys)) is located at residues 12–16; sequence WGIGC. Pro-18 bears the 4-hydroxyproline mark. Residues 19 to 33 constitute a propeptide that is removed on maturation; sequence CVGDDVTSVLTRGEA.

It belongs to the MSDIN fungal toxin family. Post-translationally, processed by the macrocyclase-peptidase enzyme POPB to yield a toxic cyclic octapeptide. POPB first removes 10 residues from the N-terminus. Conformational trapping of the remaining peptide forces the enzyme to release this intermediate rather than proceed to macrocyclization. The enzyme rebinds the remaining peptide in a different conformation and catalyzes macrocyclization of the N-terminal 8 residues. In terms of tissue distribution, expressed in basidiocarps.

In terms of biological role, major toxin belonging to the bicyclic octapeptides amatoxins that acts by binding non-competitively to RNA polymerase II and greatly slowing the elongation of transcripts from target promoters. The protein is Alpha-amanitin proprotein 2 of Amanita exitialis (Guangzhou destroying angel).